The chain runs to 314 residues: Ecto-ADP-ribosyltransferase 4 (314 aa).

An N-terminal signal peptide occupies residues 1 to 46; the sequence is MGPLINRCKKILLPTTVPPATMRIWLLGGLLPFLLLLSGLQRPTEG. Cystine bridges form between C69–C280 and C182–C231. The TR mART core domain maps to 91–276; it reads KNYFRMWQKA…LQLRSTGNLS (186 aa). The N-linked (GlcNAc...) asparagine glycan is linked to N114. An NAD(+)-binding site is contributed by Y126. N-linked (GlcNAc...) asparagine glycosylation is present at N178. Q206 contributes to the NAD(+) binding site. N222 carries an N-linked (GlcNAc...) asparagine glycan. S240 provides a ligand contact to NAD(+). N-linked (GlcNAc...) asparagine glycosylation is found at N257 and N274. A285 is lipidated: GPI-anchor amidated alanine. Positions 286–314 are cleaved as a propeptide — removed in mature form; that stretch reads SSKKCIPDPIAIASLSFLTSVIIFSKSRV.

The protein belongs to the Arg-specific ADP-ribosyltransferase family. As to expression, expressed in spleen and T-cells.

It localises to the cell membrane. The catalysed reaction is L-arginyl-[protein] + NAD(+) = N(omega)-(ADP-D-ribosyl)-L-arginyl-[protein] + nicotinamide + H(+). This Homo sapiens (Human) protein is Ecto-ADP-ribosyltransferase 4 (ART4).